The primary structure comprises 389 residues: Arrestin-C (389 aa).

The segment at 369 to 389 (AQQEPSGESQEALAAEGNEGS) is disordered.

Belongs to the arrestin family. As to quaternary structure, homodimer; disulfide-linked in response to retinal illumination. Interacts with CXCR4; the interaction is dependent on the C-terminal phosphorylation of CXCR4 and modulates the calcium ion mobilization activity of CXCR4. Interacts with GPR84. Expressed in cone photoreceptors in the retina (at protein level).

The protein localises to the photoreceptor inner segment. It localises to the cell projection. Its subcellular location is the cilium. It is found in the photoreceptor outer segment. May play a role in an as yet undefined retina-specific signal transduction. Could bind to photoactivated-phosphorylated red/green opsins. The sequence is that of Arrestin-C (ARR3) from Bos taurus (Bovine).